We begin with the raw amino-acid sequence, 876 residues long: Alanine--tRNA ligase (876 aa).

Positions 563, 567, 665, and 669 each coordinate Zn(2+).

Belongs to the class-II aminoacyl-tRNA synthetase family. Zn(2+) is required as a cofactor.

The protein localises to the cytoplasm. It carries out the reaction tRNA(Ala) + L-alanine + ATP = L-alanyl-tRNA(Ala) + AMP + diphosphate. In terms of biological role, catalyzes the attachment of alanine to tRNA(Ala) in a two-step reaction: alanine is first activated by ATP to form Ala-AMP and then transferred to the acceptor end of tRNA(Ala). Also edits incorrectly charged Ser-tRNA(Ala) and Gly-tRNA(Ala) via its editing domain. The polypeptide is Alanine--tRNA ligase (Shouchella clausii (strain KSM-K16) (Alkalihalobacillus clausii)).